Reading from the N-terminus, the 891-residue chain is Bifunctional aldehyde-alcohol dehydrogenase AdhE (891 aa).

The tract at residues 2-440 (AVTNVAELNA…ENVGPKHLIN (439 aa)) is aldehyde dehydrogenase. NAD(+) is bound by residues 110–115 (IVPTTN), glycine 195, and glycine 213. The Nucleophile role is filled by cysteine 246. NAD(+) is bound by residues glutamate 335 and leucine 419. Positions 441-448 (KKTVAKRA) are linker. An alcohol dehydrogenase region spans residues 449-891 (ENMLWHKLPK…KAEKKAKKSA (443 aa)). NAD(+) is bound by residues aspartate 487, aspartate 519, 546–550 (GSPMD), 597–598 (TT), valine 610, lysine 619, and leucine 638. Fe cation-binding residues include aspartate 653, histidine 657, histidine 723, and histidine 737.

It in the N-terminal section; belongs to the aldehyde dehydrogenase family. This sequence in the C-terminal section; belongs to the iron-containing alcohol dehydrogenase family. As to quaternary structure, forms long filaments, called spirosomes. Fe(2+) is required as a cofactor.

It carries out the reaction acetaldehyde + NAD(+) + CoA = acetyl-CoA + NADH + H(+). The enzyme catalyses ethanol + NAD(+) = acetaldehyde + NADH + H(+). It catalyses the reaction a primary alcohol + NAD(+) = an aldehyde + NADH + H(+). Under fermentative conditions, catalyzes the sequential NADH-dependent reduction of acetyl-CoA to acetaldehyde and then to ethanol. Plays an important role in virulence and is critical for proper regulation of virulence gene expression. This chain is Bifunctional aldehyde-alcohol dehydrogenase AdhE, found in Escherichia coli O157:H7.